Reading from the N-terminus, the 244-residue chain is Flagellar brake protein YcgR (244 aa).

One can recognise a PilZ domain in the interval 112 to 230 (QRREYFRIGA…ERELQRIIFS (119 aa)).

Belongs to the YcgR family. Monomer. Interacts with the flagellar basal bodies.

It is found in the bacterial flagellum basal body. In terms of biological role, acts as a flagellar brake, regulating swimming and swarming in a bis-(3'-5') cyclic diguanylic acid (c-di-GMP)-dependent manner. Overexpression of this gene decreases swimming and swarming motility; those cells that are motile turn predominantly counterclockwise. The D-118 mutant is still able to bind FliM but no longer affects motility upon overexpression. Binds 1 c-di-GMP dimer per subunit. The protein is Flagellar brake protein YcgR (ycgR) of Salmonella typhimurium (strain LT2 / SGSC1412 / ATCC 700720).